The sequence spans 379 residues: Alcohol dehydrogenase class-P (379 aa).

Residue S2 is modified to N-acetylserine. Residue C47 participates in Zn(2+) binding. T49 provides a ligand contact to an alcohol. NAD(+) is bound at residue T49. Positions 50, 69, 70, 99, 102, 105, 113, and 177 each coordinate Zn(2+). H69 provides a ligand contact to an alcohol. V206 and D226 together coordinate NAD(+). S229 bears the Phosphoserine mark. Positions 231, 272, 295, 297, 320, 322, and 372 each coordinate NAD(+).

It belongs to the zinc-containing alcohol dehydrogenase family. Class-P subfamily. Homodimer. It depends on Zn(2+) as a cofactor. Glutathionylated. In terms of tissue distribution, root specific. Also detected in etiolated seedlings and leaves in cold conditions.

It is found in the cytoplasm. The enzyme catalyses a primary alcohol + NAD(+) = an aldehyde + NADH + H(+). The catalysed reaction is a secondary alcohol + NAD(+) = a ketone + NADH + H(+). It carries out the reaction ethanol + NAD(+) = acetaldehyde + NADH + H(+). Its activity is regulated as follows. Alcohol dehydrogenase activity show inverse correlation with the decreasing availability of oxygen. Slightly repressed by thiol-modifying agents N-ethylmaleimide (NEM) and 5,5-dithio-bis-(2-nitrobenzoic acid) (DTNB), as well as by methyl methanethiosulfonate (MMTS) in a dose-dependent manner. Inhibited by hydrogen peroxide H(2)O(2). Functionally, alcohol dehydrogenase catalyzing the reduction of toxic aldehydes to the corresponding alcohols. Mostly active on ethanol (EtOH), but exhibits broad substrate selectivity for primary and secondary alcohols (e.g. cinnamyl alcohol, octanol, geraniol, butanol, propyl alcohol, pentanol, isopentanol, ethylene glycol, isopropanol, methanol and tertiary butyl alcohol). Also catalyzes the reverse reaction to convert allyl alcohol to highly toxic acryl-aldehyde. Required for survival and acclimation in hypoxic conditions, especially in roots. Not able to catalyze NADH-dependent degradation of S-nitrosoglutathione (GSNO). The protein is Alcohol dehydrogenase class-P of Arabidopsis thaliana (Mouse-ear cress).